Consider the following 146-residue polypeptide: Transcription antitermination protein NusB (146 aa).

Belongs to the NusB family.

Involved in transcription antitermination. Required for transcription of ribosomal RNA (rRNA) genes. Binds specifically to the boxA antiterminator sequence of the ribosomal RNA (rrn) operons. This Koribacter versatilis (strain Ellin345) protein is Transcription antitermination protein NusB.